The primary structure comprises 312 residues: tRNA (adenine(58)-N(1))-methyltransferase catalytic subunit trmt61a (312 aa).

S-adenosyl-L-methionine is bound by residues Leu85, 112–114 (SGS), Glu133, Arg138, 161–162 (DA), and Asp183.

This sequence belongs to the class I-like SAM-binding methyltransferase superfamily. TRM61 family. As to quaternary structure, heterotetramer; composed of two copies of trmt6 and two copies of trmt61a.

It is found in the nucleus. The enzyme catalyses adenosine(58) in tRNA + S-adenosyl-L-methionine = N(1)-methyladenosine(58) in tRNA + S-adenosyl-L-homocysteine + H(+). Its activity is regulated as follows. Inhibited by calcium and magnesium ions and spermidine. Enhanced by KCl, NaCl and NH(4)Cl in concentrations from 0.1-0.25 M. Concentrations of more than 0.3 M are inhibitory. Its function is as follows. Catalytic subunit of tRNA (adenine-N(1)-)-methyltransferase, which catalyzes the formation of N(1)-methyladenine at position 58 (m1A58) in initiator methionyl-tRNA. The sequence is that of tRNA (adenine(58)-N(1))-methyltransferase catalytic subunit trmt61a (trmt61a) from Dictyostelium discoideum (Social amoeba).